A 456-amino-acid polypeptide reads, in one-letter code: Phosphomethylpyrimidine synthase (456 aa).

Residues Asn-80, Met-109, Tyr-139, His-175, 195-197, 236-239, and Glu-275 each bind substrate; these read SRG and DSLR. Position 279 (His-279) interacts with Zn(2+). A substrate-binding site is contributed by Tyr-302. His-343 serves as a coordination point for Zn(2+). Residues Cys-423, Cys-426, and Cys-431 each contribute to the [4Fe-4S] cluster site.

The protein belongs to the ThiC family. [4Fe-4S] cluster is required as a cofactor.

It catalyses the reaction 5-amino-1-(5-phospho-beta-D-ribosyl)imidazole + S-adenosyl-L-methionine = 4-amino-2-methyl-5-(phosphooxymethyl)pyrimidine + CO + 5'-deoxyadenosine + formate + L-methionine + 3 H(+). It functions in the pathway cofactor biosynthesis; thiamine diphosphate biosynthesis. In terms of biological role, catalyzes the synthesis of the hydroxymethylpyrimidine phosphate (HMP-P) moiety of thiamine from aminoimidazole ribotide (AIR) in a radical S-adenosyl-L-methionine (SAM)-dependent reaction. In Prochlorococcus marinus subsp. pastoris (strain CCMP1986 / NIES-2087 / MED4), this protein is Phosphomethylpyrimidine synthase.